The sequence spans 197 residues: Imidazoleglycerol-phosphate dehydratase (197 aa).

This sequence belongs to the imidazoleglycerol-phosphate dehydratase family.

Its subcellular location is the cytoplasm. The enzyme catalyses D-erythro-1-(imidazol-4-yl)glycerol 3-phosphate = 3-(imidazol-4-yl)-2-oxopropyl phosphate + H2O. The protein operates within amino-acid biosynthesis; L-histidine biosynthesis; L-histidine from 5-phospho-alpha-D-ribose 1-diphosphate: step 6/9. The protein is Imidazoleglycerol-phosphate dehydratase of Pseudomonas putida (strain GB-1).